A 248-amino-acid polypeptide reads, in one-letter code: tRNA pseudouridine synthase A (248 aa).

The active-site Nucleophile is Asp-52. Tyr-113 is a binding site for substrate.

The protein belongs to the tRNA pseudouridine synthase TruA family. Homodimer.

It carries out the reaction uridine(38/39/40) in tRNA = pseudouridine(38/39/40) in tRNA. In terms of biological role, formation of pseudouridine at positions 38, 39 and 40 in the anticodon stem and loop of transfer RNAs. The polypeptide is tRNA pseudouridine synthase A (Mesorhizobium japonicum (strain LMG 29417 / CECT 9101 / MAFF 303099) (Mesorhizobium loti (strain MAFF 303099))).